The primary structure comprises 350 residues: Uroporphyrinogen decarboxylase (350 aa).

Residues 27-31, phenylalanine 46, aspartate 76, tyrosine 152, serine 207, and histidine 321 contribute to the substrate site; that span reads RQAGR.

This sequence belongs to the uroporphyrinogen decarboxylase family. Homodimer.

The protein resides in the cytoplasm. It catalyses the reaction uroporphyrinogen III + 4 H(+) = coproporphyrinogen III + 4 CO2. The protein operates within porphyrin-containing compound metabolism; protoporphyrin-IX biosynthesis; coproporphyrinogen-III from 5-aminolevulinate: step 4/4. Its function is as follows. Catalyzes the decarboxylation of four acetate groups of uroporphyrinogen-III to yield coproporphyrinogen-III. The sequence is that of Uroporphyrinogen decarboxylase from Listeria innocua serovar 6a (strain ATCC BAA-680 / CLIP 11262).